Reading from the N-terminus, the 357-residue chain is Uroporphyrinogen decarboxylase (357 aa).

Residues 30 to 34 (RQAGR), Asp79, Tyr154, Ser209, and His336 each bind substrate.

This sequence belongs to the uroporphyrinogen decarboxylase family. Homodimer.

The protein resides in the cytoplasm. It catalyses the reaction uroporphyrinogen III + 4 H(+) = coproporphyrinogen III + 4 CO2. It participates in porphyrin-containing compound metabolism; protoporphyrin-IX biosynthesis; coproporphyrinogen-III from 5-aminolevulinate: step 4/4. In terms of biological role, catalyzes the decarboxylation of four acetate groups of uroporphyrinogen-III to yield coproporphyrinogen-III. The sequence is that of Uroporphyrinogen decarboxylase from Mycobacterium bovis (strain ATCC BAA-935 / AF2122/97).